The primary structure comprises 424 residues: Enolase (424 aa).

A (2R)-2-phosphoglycerate-binding site is contributed by glutamine 162. Glutamate 204 serves as the catalytic Proton donor. 3 residues coordinate Mg(2+): aspartate 241, glutamate 284, and aspartate 311. Residues lysine 336, arginine 365, serine 366, and lysine 387 each coordinate (2R)-2-phosphoglycerate. Catalysis depends on lysine 336, which acts as the Proton acceptor.

The protein belongs to the enolase family. Mg(2+) serves as cofactor.

Its subcellular location is the cytoplasm. It localises to the secreted. The protein localises to the cell surface. The enzyme catalyses (2R)-2-phosphoglycerate = phosphoenolpyruvate + H2O. It functions in the pathway carbohydrate degradation; glycolysis; pyruvate from D-glyceraldehyde 3-phosphate: step 4/5. Its function is as follows. Catalyzes the reversible conversion of 2-phosphoglycerate (2-PG) into phosphoenolpyruvate (PEP). It is essential for the degradation of carbohydrates via glycolysis. The polypeptide is Enolase (Rhizobium johnstonii (strain DSM 114642 / LMG 32736 / 3841) (Rhizobium leguminosarum bv. viciae)).